Reading from the N-terminus, the 116-residue chain is Peptidyl-tRNA hydrolase (116 aa).

Belongs to the PTH2 family.

The protein resides in the cytoplasm. The enzyme catalyses an N-acyl-L-alpha-aminoacyl-tRNA + H2O = an N-acyl-L-amino acid + a tRNA + H(+). In terms of biological role, the natural substrate for this enzyme may be peptidyl-tRNAs which drop off the ribosome during protein synthesis. The protein is Peptidyl-tRNA hydrolase of Methanococcus maripaludis (strain C7 / ATCC BAA-1331).